A 397-amino-acid chain; its full sequence is Acetate kinase (397 aa).

Residue Asn8 coordinates Mg(2+). Residue Lys15 participates in ATP binding. Residue Arg89 participates in substrate binding. Asp146 serves as the catalytic Proton donor/acceptor. ATP contacts are provided by residues His206–Gly210, Asp283–Arg285, and Gly331–Asn335. Glu383 provides a ligand contact to Mg(2+).

It belongs to the acetokinase family. In terms of assembly, homodimer. The cofactor is Mg(2+). Requires Mn(2+) as cofactor.

Its subcellular location is the cytoplasm. The enzyme catalyses acetate + ATP = acetyl phosphate + ADP. Its pathway is metabolic intermediate biosynthesis; acetyl-CoA biosynthesis; acetyl-CoA from acetate: step 1/2. Functionally, catalyzes the formation of acetyl phosphate from acetate and ATP. Can also catalyze the reverse reaction. The sequence is that of Acetate kinase from Streptococcus thermophilus (strain ATCC BAA-491 / LMD-9).